We begin with the raw amino-acid sequence, 509 residues long: Dol-P-Glc:Glc(2)Man(9)GlcNAc(2)-PP-Dol alpha-1,2-glucosyltransferase (509 aa).

Topologically, residues 1 to 4 (MGKL) are cytoplasmic. Residues 5 to 25 (AVAAITSLWVIPMSIIVNHIV) traverse the membrane as a helical segment. Topologically, residues 26–57 (PEPYMDEIFHVPQAQQYCNGNFRSWDPMITTP) are lumenal. Residues 58-78 (PGLYYLSLAHVASLFPGMLLM) traverse the membrane as a helical segment. Residues 79 to 99 (ENTSQSFSEACSTSVLRSTNA) are Cytoplasmic-facing. Residues 100 to 120 (VSAVLCGVLVYEIIRFLGPNL) traverse the membrane as a helical segment. Residues 121-124 (SDRK) lie on the Lumenal side of the membrane. Residues 125-145 (ATFMALVMSLYPLHWFFTFLY) traverse the membrane as a helical segment. Topologically, residues 146 to 170 (YTDVASLTAVLAMYLTCLKRRYVLS) are cytoplasmic. The chain crosses the membrane as a helical span at residues 171 to 191 (ALFGTLAVFIRQTNVVWMLFV). Residues 192-285 (ACSGILDFTL…KWRILIKFSP (94 aa)) lie on the Lumenal side of the membrane. Residues 210–254 (QEVNQELHQSSNKKGATLRSNLRKRKSDISSDTSDPFNHGQTVPS) are disordered. Composition is skewed to polar residues over residues 215-229 (ELHQ…TLRS) and 239-254 (SSDT…TVPS). Residues 286–306 (FIFVVVAFGIFILWNGGIVLG) form a helical membrane-spanning segment. The Cytoplasmic portion of the chain corresponds to 307–311 (AKEAH). Residues 312-332 (VVSLHFAQIMYFSLVSALFTA) form a helical membrane-spanning segment. Residues 333-355 (PLHFSVNQLRHQFHQLHRNWSLS) are Lumenal-facing. N-linked (GlcNAc...) asparagine glycosylation occurs at asparagine 351. A helical membrane pass occupies residues 356 to 376 (LILTLVALVAGFVSVHFFSLA). Residues 377 to 400 (HPYLLADNRHYPFYLWRKIINAHW) are Cytoplasmic-facing. A helical transmembrane segment spans residues 401–421 (LMKYILVPVYVYSWFSILTLL). The Lumenal portion of the chain corresponds to 422 to 428 (AKTRRQT). Residues 429–449 (WILVYFLATCGVLVPTPLIEF) form a helical membrane-spanning segment. At 450–472 (RYYTIPFYLFMLHSCVRSSSFAT) the chain is on the cytoplasmic side. A helical transmembrane segment spans residues 473 to 493 (WLLIGTIFVSINVFTMAMFLF). Residues 494 to 509 (RPFKWSHEDGVQRFIW) are Lumenal-facing.

It belongs to the ALG10 glucosyltransferase family.

The protein localises to the endoplasmic reticulum membrane. It catalyses the reaction an alpha-D-Glc-(1-&gt;3)-alpha-D-Glc-(1-&gt;3)-alpha-D-Man-(1-&gt;2)-alpha-D-Man-(1-&gt;2)-alpha-D-Man-(1-&gt;3)-[alpha-D-Man-(1-&gt;2)-alpha-D-Man-(1-&gt;3)-[alpha-D-Man-(1-&gt;2)-alpha-D-Man-(1-&gt;6)]-alpha-D-Man-(1-&gt;6)]-beta-D-Man-(1-&gt;4)-beta-D-GlcNAc-(1-&gt;4)-alpha-D-GlcNAc-diphospho-di-trans,poly-cis-dolichol + a di-trans,poly-cis-dolichyl beta-D-glucosyl phosphate = a alpha-D-Glc-(1-&gt;2)-alpha-D-Glc-(1-&gt;3)-alpha-D-Glc-(1-&gt;3)-alpha-D-Man-(1-&gt;2)-alpha-D-Man-(1-&gt;2)-alpha-D-Man-(1-&gt;3)-[alpha-D-Man-(1-&gt;2)-alpha-D-Man-(1-&gt;3)-[alpha-D-Man-(1-&gt;2)-alpha-D-Man-(1-&gt;6)]-alpha-D-Man-(1-&gt;6)]-beta-D-Man-(1-&gt;4)-beta-D-GlcNAc-(1-&gt;4)-alpha-D-GlcNAc-diphospho-di-trans,poly-cis-dolichol + a di-trans,poly-cis-dolichyl phosphate + H(+). The protein operates within protein modification; protein glycosylation. Dol-P-Glc:Glc(2)Man(9)GlcNAc(2)-PP-Dol alpha-1,2-glucosyltransferase that operates in the biosynthetic pathway of dolichol-linked oligosaccharides, the glycan precursors employed in protein asparagine (N)-glycosylation. The assembly of dolichol-linked oligosaccharides begins on the cytosolic side of the endoplasmic reticulum membrane and finishes in its lumen. The sequential addition of sugars to dolichol pyrophosphate produces dolichol-linked oligosaccharides containing fourteen sugars, including two GlcNAcs, nine mannoses and three glucoses. Once assembled, the oligosaccharide is transferred from the lipid to nascent proteins by oligosaccharyltransferases. In the lumen of the endoplasmic reticulum, adds the third and last glucose residue from dolichyl phosphate glucose (Dol-P-Glc) onto the lipid-linked oligosaccharide intermediate Glc(2)Man(9)GlcNAc(2)-PP-Dol to produce Glc(3)Man(9)GlcNAc(2)-PP-Dol. The polypeptide is Dol-P-Glc:Glc(2)Man(9)GlcNAc(2)-PP-Dol alpha-1,2-glucosyltransferase (Arabidopsis thaliana (Mouse-ear cress)).